The primary structure comprises 118 residues: Large ribosomal subunit protein bL20 (118 aa).

It belongs to the bacterial ribosomal protein bL20 family.

Functionally, binds directly to 23S ribosomal RNA and is necessary for the in vitro assembly process of the 50S ribosomal subunit. It is not involved in the protein synthesizing functions of that subunit. In Staphylococcus saprophyticus subsp. saprophyticus (strain ATCC 15305 / DSM 20229 / NCIMB 8711 / NCTC 7292 / S-41), this protein is Large ribosomal subunit protein bL20.